Here is a 137-residue protein sequence, read N- to C-terminus: Large ribosomal subunit protein uL16 (137 aa).

This sequence belongs to the universal ribosomal protein uL16 family. Part of the 50S ribosomal subunit.

In terms of biological role, binds 23S rRNA and is also seen to make contacts with the A and possibly P site tRNAs. This Streptococcus mutans serotype c (strain ATCC 700610 / UA159) protein is Large ribosomal subunit protein uL16.